Reading from the N-terminus, the 556-residue chain is DNA ligase B (556 aa).

K126 functions as the N6-AMP-lysine intermediate in the catalytic mechanism.

This sequence belongs to the NAD-dependent DNA ligase family. LigB subfamily.

The enzyme catalyses NAD(+) + (deoxyribonucleotide)n-3'-hydroxyl + 5'-phospho-(deoxyribonucleotide)m = (deoxyribonucleotide)n+m + AMP + beta-nicotinamide D-nucleotide.. Its function is as follows. Catalyzes the formation of phosphodiester linkages between 5'-phosphoryl and 3'-hydroxyl groups in double-stranded DNA using NAD as a coenzyme and as the energy source for the reaction. This chain is DNA ligase B, found in Stutzerimonas stutzeri (strain A1501) (Pseudomonas stutzeri).